The sequence spans 568 residues: Putative U-box domain-containing protein 55 (568 aa).

The stretch at 217 to 464 forms a coiled coil; that stretch reads QSESDRNDQL…KVAAEKDAAS (248 aa). Residues 496–568 enclose the U-box domain; it reads QPPSYFICPI…AIQEWLQRNS (73 aa).

The enzyme catalyses S-ubiquitinyl-[E2 ubiquitin-conjugating enzyme]-L-cysteine + [acceptor protein]-L-lysine = [E2 ubiquitin-conjugating enzyme]-L-cysteine + N(6)-ubiquitinyl-[acceptor protein]-L-lysine.. Its pathway is protein modification; protein ubiquitination. Functionally, functions as an E3 ubiquitin ligase. In Arabidopsis thaliana (Mouse-ear cress), this protein is Putative U-box domain-containing protein 55 (PUB55).